The following is a 2146-amino-acid chain: YLP motif-containing protein 1 (2146 aa).

2 disordered regions span residues 1 to 381 (MYPN…ARLK) and 562 to 880 (PPVM…FKMQ). The span at 14-26 (YPPPPVPPPPPVA) shows a compositional bias: pro residues. Composition is skewed to low complexity over residues 27-48 (LPEA…PSSS) and 58-79 (LAQL…LQPH). 5 stretches are compositionally biased toward pro residues: residues 80–92 (HLPP…PPVM), 101–113 (QPPP…PPGP), 147–157 (PESPPVPPGSY), 165–175 (MPPPQPPPSYY), and 183–194 (YLPPAQPSPSQS). Residues 195-237 (PPSQSYLAPTPSYSSSSSSSQSYLSHSQSYLPSSQASPSRPSQ) are compositionally biased toward low complexity. Polar residues-rich tracts occupy residues 256 to 279 (NKTT…QQQA) and 286 to 308 (STMT…LQQR). The segment covering 309–319 (TKVHLPGHKKG) has biased composition (basic residues). A compositionally biased stretch (basic and acidic residues) spans 325–334 (DTPEPVKEEV). 3 stretches are compositionally biased toward pro residues: residues 349-368 (EEPP…PPEE), 562-579 (PPVM…PGMP), and 586-642 (GPPP…PQGI). The span at 643-663 (PPQLTAAPVPPASSSQSSQVP) shows a compositional bias: low complexity. Residues 692–702 (AGPSEQVNSKA) show a composition bias toward polar residues. K735 is subject to N6-methyllysine. The residue at position 756 (S756) is a Phosphoserine. The span at 758-806 (RGPRFDGPRRFEDLGSRCEGPRPKGPRFEGNRPDGPRPRYEGHPAEGTK) shows a compositional bias: basic and acidic residues. An Omega-N-methylarginine modification is found at R814. Composition is skewed to polar residues over residues 820-835 (FYIT…QSGP) and 868-880 (DTSS…FKMQ). S829 is subject to Phosphoserine. At R831 the chain carries Omega-N-methylarginine. Residue K891 forms a Glycyl lysine isopeptide (Lys-Gly) (interchain with G-Cter in SUMO2) linkage. 2 disordered regions span residues 895–1211 (AAQS…GRNA) and 1243–1351 (NRED…DDRW). Polar residues-rich tracts occupy residues 896 to 909 (AQSN…QQEP) and 923 to 933 (NWDQNVQSMET). Residue K983 forms a Glycyl lysine isopeptide (Lys-Gly) (interchain with G-Cter in SUMO1); alternate linkage. K983 participates in a covalent cross-link: Glycyl lysine isopeptide (Lys-Gly) (interchain with G-Cter in SUMO2); alternate. Composition is skewed to basic and acidic residues over residues 994 to 1012 (NNQD…RLEG), 1027 to 1036 (RMEDTRDKGL), and 1053 to 1093 (KQED…REKV). A Glycyl lysine isopeptide (Lys-Gly) (interchain with G-Cter in SUMO1); alternate cross-link involves residue K1053. K1053 is covalently cross-linked (Glycyl lysine isopeptide (Lys-Gly) (interchain with G-Cter in SUMO2); alternate). Phosphoserine occurs at positions 1100 and 1119. Basic and acidic residues-rich tracts occupy residues 1129–1211 (GSRE…GRNA) and 1243–1264 (NRED…RGPW). Acidic residues predominate over residues 1266-1276 (DDWERDQDMDE). Residues 1277–1328 (DYNREMERDMDRDVDRISRPMDMYDRSLDNEWDRDYGRPLDEQESQFRERDI) are compositionally biased toward basic and acidic residues. Positions 1330–1342 (SLPPLPPLPPLPP) are enriched in pro residues. At S1402 the chain carries Phosphoserine. 3 disordered regions span residues 1407-1438 (PSDV…SLDS), 1469-1573 (QKEQ…EQER), and 1602-1828 (IPSA…PPGR). Low complexity predominate over residues 1417 to 1430 (AEHMPSSHHSSEMM). Over residues 1469–1480 (QKEQLQKMKDFG) the composition is skewed to basic and acidic residues. A compositionally biased stretch (pro residues) spans 1505–1520 (MYPPPGSYRPPPPMGK). Residues 1521–1539 (PPGSIVRPSAPPARSSVPV) are compositionally biased toward low complexity. Pro residues-rich tracts occupy residues 1540–1562 (TRPP…PPVI) and 1606–1636 (PVLP…PPPV). K1652 is covalently cross-linked (Glycyl lysine isopeptide (Lys-Gly) (interchain with G-Cter in SUMO2)). 4 stretches are compositionally biased toward basic and acidic residues: residues 1662-1696 (ITLR…EPYF), 1704-1774 (ADHR…DRPV), 1783-1793 (GERRTYPEERM), and 1809-1828 (RVEK…PPGR). K1710 participates in a covalent cross-link: Glycyl lysine isopeptide (Lys-Gly) (interchain with G-Cter in SUMO2). The involved in interaction with PPP1CA stretch occupies residues 2096–2103 (KKRVRWAD).

Interacts with PPP1CA and NCOA5. Forms a complex with ILF2, ILF3, KHDRBS1, RBMX, NCOA5 and PPP1CA. In terms of tissue distribution, expressed in neuronal, neuroblastoma and embryonic kidney cell lines (at protein level).

The protein localises to the nucleus. It localises to the nucleus speckle. In terms of biological role, plays a role in the reduction of telomerase activity during differentiation of embryonic stem cells by binding to the core promoter of TERT and controlling its down-regulation. The polypeptide is YLP motif-containing protein 1 (YLPM1) (Homo sapiens (Human)).